The following is a 523-amino-acid chain: Probable malate:quinone oxidoreductase (523 aa).

Belongs to the MQO family. FAD serves as cofactor.

It catalyses the reaction (S)-malate + a quinone = a quinol + oxaloacetate. It participates in carbohydrate metabolism; tricarboxylic acid cycle; oxaloacetate from (S)-malate (quinone route): step 1/1. This is Probable malate:quinone oxidoreductase from Agrobacterium fabrum (strain C58 / ATCC 33970) (Agrobacterium tumefaciens (strain C58)).